The following is a 207-amino-acid chain: Pyridoxal 5'-phosphate synthase subunit PdxT (207 aa).

Residue Gly-51–Ser-53 participates in L-glutamine binding. Cys-83 (nucleophile) is an active-site residue. L-glutamine-binding positions include Arg-112 and Ile-143–Arg-144. Catalysis depends on charge relay system residues His-184 and Glu-186.

Belongs to the glutaminase PdxT/SNO family. In terms of assembly, in the presence of PdxS, forms a dodecamer of heterodimers. Only shows activity in the heterodimer.

It carries out the reaction aldehydo-D-ribose 5-phosphate + D-glyceraldehyde 3-phosphate + L-glutamine = pyridoxal 5'-phosphate + L-glutamate + phosphate + 3 H2O + H(+). The enzyme catalyses L-glutamine + H2O = L-glutamate + NH4(+). The protein operates within cofactor biosynthesis; pyridoxal 5'-phosphate biosynthesis. Catalyzes the hydrolysis of glutamine to glutamate and ammonia as part of the biosynthesis of pyridoxal 5'-phosphate. The resulting ammonia molecule is channeled to the active site of PdxS. The sequence is that of Pyridoxal 5'-phosphate synthase subunit PdxT from Kineococcus radiotolerans (strain ATCC BAA-149 / DSM 14245 / SRS30216).